The sequence spans 374 residues: Growth/differentiation factor 8 (374 aa).

Positions 1–22 (MHFTQVLISLSVLIACGPVGYG) are cleaved as a signal peptide. A propeptide spanning residues 23-265 (DITAHQQPST…ISEGPKRIRR (243 aa)) is cleaved from the precursor. N-linked (GlcNAc...) asparagine glycosylation is found at asparagine 72 and asparagine 274. Intrachain disulfides connect cysteine 271-cysteine 281, cysteine 280-cysteine 339, cysteine 308-cysteine 371, and cysteine 312-cysteine 373.

Belongs to the TGF-beta family. As to quaternary structure, homodimer; disulfide-linked. In terms of tissue distribution, predominantly expressed in muscle. At hatching, expression is strongest in the skin epithelium, and is also found in the retina and brain. From day 28, expressed in skeletal muscle. In the adult, highest expression is seen in the gastrointestinal tract, brain, muscle, heart and testis. Also expressed in the adult pharynx, kidney, spleen, liver, gill, eyes, skin, swim bladder and ovary.

The protein localises to the secreted. Acts specifically as a negative regulator of skeletal muscle growth. May down-regulate muscle-specific transcription factors such as myod and myog. The protein is Growth/differentiation factor 8 (mstnb) of Danio rerio (Zebrafish).